Here is a 561-residue protein sequence, read N- to C-terminus: Arginine--tRNA ligase (561 aa).

The 'HIGH' region signature appears at 128-138 (ANPTGPLHVGH).

It belongs to the class-I aminoacyl-tRNA synthetase family. In terms of assembly, monomer.

It localises to the cytoplasm. It catalyses the reaction tRNA(Arg) + L-arginine + ATP = L-arginyl-tRNA(Arg) + AMP + diphosphate. The polypeptide is Arginine--tRNA ligase (Methylibium petroleiphilum (strain ATCC BAA-1232 / LMG 22953 / PM1)).